A 307-amino-acid polypeptide reads, in one-letter code: Ribonuclease Z (307 aa).

Zn(2+)-binding residues include histidine 63, histidine 65, aspartate 67, histidine 68, histidine 143, aspartate 213, and histidine 271. The active-site Proton acceptor is aspartate 67.

It belongs to the RNase Z family. As to quaternary structure, homodimer. The cofactor is Zn(2+).

The enzyme catalyses Endonucleolytic cleavage of RNA, removing extra 3' nucleotides from tRNA precursor, generating 3' termini of tRNAs. A 3'-hydroxy group is left at the tRNA terminus and a 5'-phosphoryl group is left at the trailer molecule.. Functionally, zinc phosphodiesterase, which displays some tRNA 3'-processing endonuclease activity. Probably involved in tRNA maturation, by removing a 3'-trailer from precursor tRNA. The protein is Ribonuclease Z of Lactococcus lactis subsp. cremoris (strain MG1363).